Here is a 136-residue protein sequence, read N- to C-terminus: MKRYILATAIASLVAAPAMALAAGSNILSVHILDQQTGKPAPGVEVVLEQKKDNGWTQLNTGHTDQDGRIKALWPEKAAAPGDYRVIFKTGQYFESKKLDTFFPEIPVEFHISKTNEHYHVPLLLSQYGYSTYRGS.

Positions 1-20 are cleaved as a signal peptide; sequence MKRYILATAIASLVAAPAMA. His31, Arg69, and Tyr133 together coordinate substrate.

Belongs to the transthyretin family. 5-hydroxyisourate hydrolase subfamily. Homotetramer.

The protein localises to the periplasm. It carries out the reaction 5-hydroxyisourate + H2O = 5-hydroxy-2-oxo-4-ureido-2,5-dihydro-1H-imidazole-5-carboxylate + H(+). Its function is as follows. Catalyzes the hydrolysis of 5-hydroxyisourate (HIU) to 2-oxo-4-hydroxy-4-carboxy-5-ureidoimidazoline (OHCU). The protein is 5-hydroxyisourate hydrolase (hiuH) of Salmonella typhi.